The chain runs to 300 residues: MQTDLSDSSFFNHKSVMTDEIMASLEHYPLIHNNQLKGIDATLGGGGHSFNLLRKYSELNIIGLDQDPFARISASKKLDEFKNRIDIRASNFADFVPKEKVSFVIADLGVNSNQIDDPKRGFSFQKDGPLDMRMNPLLEVDAEKLIEALNEKDLANLIYKYGDERLSRKIARKIKLDLKENGKYSGTKELAYSIAGCFPPKQRYKKIHPATRTFQALRIAVNKEIEVLEKFLQAVPEWLLPGGIISIISFHSLEDRLVKSSFKNDQRLKNLTKKPITPSEQEVEFNKRARSGKLRIAQLK.

Residues 46-48 (GGH), aspartate 65, phenylalanine 92, aspartate 107, and glutamine 114 each bind S-adenosyl-L-methionine.

It belongs to the methyltransferase superfamily. RsmH family.

It localises to the cytoplasm. It carries out the reaction cytidine(1402) in 16S rRNA + S-adenosyl-L-methionine = N(4)-methylcytidine(1402) in 16S rRNA + S-adenosyl-L-homocysteine + H(+). Its function is as follows. Specifically methylates the N4 position of cytidine in position 1402 (C1402) of 16S rRNA. The chain is Ribosomal RNA small subunit methyltransferase H from Prochlorococcus marinus (strain MIT 9215).